Reading from the N-terminus, the 392-residue chain is Chaperone protein DnaJ (392 aa).

A J domain is found at 5 to 75 (DYYEVLGIDK…QKKQQYDQFG (71 aa)). A CR-type zinc finger spans residues 148-229 (GVEKTIKYKR…CHGTGTAKET (82 aa)). Zn(2+) contacts are provided by Cys-161, Cys-164, Cys-177, Cys-180, Cys-203, Cys-206, Cys-217, and Cys-220. 4 CXXCXGXG motif repeats span residues 161 to 168 (CENCHGTG), 177 to 184 (CPTCNGQG), 203 to 210 (CPDCHGTG), and 217 to 224 (CKHCHGTG).

Belongs to the DnaJ family. Homodimer. Zn(2+) serves as cofactor.

The protein resides in the cytoplasm. In terms of biological role, participates actively in the response to hyperosmotic and heat shock by preventing the aggregation of stress-denatured proteins and by disaggregating proteins, also in an autonomous, DnaK-independent fashion. Unfolded proteins bind initially to DnaJ; upon interaction with the DnaJ-bound protein, DnaK hydrolyzes its bound ATP, resulting in the formation of a stable complex. GrpE releases ADP from DnaK; ATP binding to DnaK triggers the release of the substrate protein, thus completing the reaction cycle. Several rounds of ATP-dependent interactions between DnaJ, DnaK and GrpE are required for fully efficient folding. Also involved, together with DnaK and GrpE, in the DNA replication of plasmids through activation of initiation proteins. In Fusobacterium nucleatum subsp. nucleatum (strain ATCC 25586 / DSM 15643 / BCRC 10681 / CIP 101130 / JCM 8532 / KCTC 2640 / LMG 13131 / VPI 4355), this protein is Chaperone protein DnaJ.